The following is a 327-amino-acid chain: Deoxynucleotidyltransferase terminal-interacting protein 1 (327 aa).

The span at 1 to 11 shows a compositional bias: gly residues; that stretch reads MGATGDTGGPR. Disordered regions lie at residues 1–34 and 146–172; these read MGAT…PVLT and KRGR…LPGH. Positions 55–146 are important for dimerization; it reads MTTSFTDPAI…RLAHELPGIK (92 aa). The span at 146–161 shows a compositional bias: basic and acidic residues; sequence KRGRQAEEESHREAPF. The a.T hook DNA-binding region spans 157–171; that stretch reads REAPFPKRGKVGLPG. Residues 162–168 carry the Nuclear localization signal motif; the sequence is PKRGKVG. Positions 195-314 are important for DNA and nucleosome binding; the sequence is REGPKWDPAR…MRKYMETLRT (120 aa). Positions 214–235 form a DNA-binding region, H-T-H motif; sequence GSRANKALGMGGTRGRIYIKHP.

In terms of assembly, monomer and homodimer. A minor proportion may form homotrimers. Interacts with ZNF541. Interacts with the terminal deoxynucleotidyltransferase DNTT. Interacts with TRERF1. Identified in a histone deacetylase complex that contains DNTTIP1, HDAC1 and MIDEAS; this complex assembles into a tetramer that contains four copies of each protein chain. Component of a histone deacetylase complex containing DNTTIP1, ZNF541, HDAC1 and HDAC2. Identified in a complex with KCTD19, HDAC1, HDAC2 and ZNF541. Expressed in thymus, bone marrow and spleen.

It localises to the nucleus. In terms of biological role, increases DNTT terminal deoxynucleotidyltransferase activity (in vitro). Also acts as a transcriptional regulator, binding to the consensus sequence 5'-GNTGCATG-3' following an AT-tract. Associates with RAB20 promoter and positively regulates its transcription. Binds DNA and nucleosomes; may recruit HDAC1 complexes to nucleosomes or naked DNA. The polypeptide is Deoxynucleotidyltransferase terminal-interacting protein 1 (Dnttip1) (Rattus norvegicus (Rat)).